A 511-amino-acid chain; its full sequence is GMP synthase [glutamine-hydrolyzing] (511 aa).

One can recognise a Glutamine amidotransferase type-1 domain in the interval 5–195; sequence LILVLDFGGQ…LYKICGCSGD (191 aa). The active-site Nucleophile is Cys82. Catalysis depends on residues His169 and Glu171. A GMPS ATP-PPase domain is found at 196-386; the sequence is WKMASFIEHS…LGIPEDIVMR (191 aa). 223-229 is an ATP binding site; the sequence is SGGVDSS.

As to quaternary structure, homodimer.

The catalysed reaction is XMP + L-glutamine + ATP + H2O = GMP + L-glutamate + AMP + diphosphate + 2 H(+). It functions in the pathway purine metabolism; GMP biosynthesis; GMP from XMP (L-Gln route): step 1/1. In terms of biological role, catalyzes the synthesis of GMP from XMP. This Acetivibrio thermocellus (strain ATCC 27405 / DSM 1237 / JCM 9322 / NBRC 103400 / NCIMB 10682 / NRRL B-4536 / VPI 7372) (Clostridium thermocellum) protein is GMP synthase [glutamine-hydrolyzing].